We begin with the raw amino-acid sequence, 483 residues long: Altronate oxidoreductase (483 aa).

Residue 18-29 (IIQFGEGNFLRA) coordinates NAD(+).

This sequence belongs to the mannitol dehydrogenase family. UxaB subfamily.

It carries out the reaction D-altronate + NAD(+) = keto-D-tagaturonate + NADH + H(+). It functions in the pathway carbohydrate metabolism; pentose and glucuronate interconversion. The polypeptide is Altronate oxidoreductase (Yersinia pestis).